A 303-amino-acid chain; its full sequence is uncharacterized protein (303 aa).

The next 4 helical transmembrane spans lie at T102–I122, F132–F152, L184–Y204, and F221–F241.

It is found in the membrane. This is an uncharacterized protein from Dictyostelium discoideum (Social amoeba).